The primary structure comprises 222 residues: ATP-dependent Clp protease proteolytic subunit (222 aa).

The active-site Nucleophile is the S125. Residue H150 is part of the active site.

Belongs to the peptidase S14 family. In terms of assembly, fourteen ClpP subunits assemble into 2 heptameric rings which stack back to back to give a disk-like structure with a central cavity, resembling the structure of eukaryotic proteasomes.

It localises to the cytoplasm. The enzyme catalyses Hydrolysis of proteins to small peptides in the presence of ATP and magnesium. alpha-casein is the usual test substrate. In the absence of ATP, only oligopeptides shorter than five residues are hydrolyzed (such as succinyl-Leu-Tyr-|-NHMec, and Leu-Tyr-Leu-|-Tyr-Trp, in which cleavage of the -Tyr-|-Leu- and -Tyr-|-Trp bonds also occurs).. Its function is as follows. Cleaves peptides in various proteins in a process that requires ATP hydrolysis. Has a chymotrypsin-like activity. Plays a major role in the degradation of misfolded proteins. This chain is ATP-dependent Clp protease proteolytic subunit, found in Porphyromonas gingivalis (strain ATCC BAA-308 / W83).